The sequence spans 63 residues: MIYLITNPPYVELEKYIKCFPLSVCIRLIKYLNLELMFNVTNSSPYNTPLFIFRFGYNSLSCS.

This is an uncharacterized protein from Vaccinia virus (strain Western Reserve) (VACV).